The sequence spans 1054 residues: SMC5-SMC6 complex localization factor protein 1 (1054 aa).

BRCT domains lie at Glu-2–Gly-80 and Pro-121–Lys-199. The tract at residues Arg-283–Tyr-303 is disordered. The span at His-284 to Ile-299 shows a compositional bias: basic and acidic residues. The NSE5-like domain; mediates interaction with SLF2 stretch occupies residues Pro-407 to Ser-1054. 3 ANK repeats span residues Lys-802 to Val-832, Ala-836 to Leu-865, and Asp-870 to Gln-900.

As to quaternary structure, interacts (via BRCT domains) with RAD18 (via C-terminus and phosphorylated form); this interaction is required for efficient repair of UV-induced DNA damage. Interacts (via N-terminus) with SLF2; this interaction links RAD18 to the SMC5-SMC6 complex. Interacts (via BRCT domains) with RAD18; this interaction occurs in a SLF2-independent manner. Interacts with SMC6. As to expression, widely expressed. Expressed in testis. Expressed in spermatocytes.

It localises to the nucleus. It is found in the cytoplasm. Its subcellular location is the cytoskeleton. The protein localises to the microtubule organizing center. The protein resides in the centrosome. Plays a role in the DNA damage response (DDR) pathway by regulating postreplication repair of UV-damaged DNA and genomic stability maintenance. The SLF1-SLF2 complex acts to link RAD18 with the SMC5-SMC6 complex at replication-coupled interstrand cross-links (ICL) and DNA double-strand breaks (DSBs) sites on chromatin during DNA repair in response to stalled replication forks. Promotes the recruitment of SLF2 and the SMC5-SMC6 complex to DNA lesions. The chain is SMC5-SMC6 complex localization factor protein 1 from Mus musculus (Mouse).